The sequence spans 226 residues: Small ribosomal subunit protein uS5 (226 aa).

Residues 1-18 (MAAPQRSRTTGAPSSGGP) are compositionally biased toward polar residues. Positions 1 to 45 (MAAPQRSRTTGAPSSGGPSENERGRGGDRRGGDRRGGDRRGGDDR) are disordered. Basic and acidic residues predominate over residues 20-45 (ENERGRGGDRRGGDRRGGDRRGGDDR). The region spanning 48–111 (FVERVVTINR…EEAKKNFFRV (64 aa)) is the S5 DRBM domain.

This sequence belongs to the universal ribosomal protein uS5 family. In terms of assembly, part of the 30S ribosomal subunit. Contacts proteins S4 and S8.

Its function is as follows. With S4 and S12 plays an important role in translational accuracy. Located at the back of the 30S subunit body where it stabilizes the conformation of the head with respect to the body. The polypeptide is Small ribosomal subunit protein uS5 (Beutenbergia cavernae (strain ATCC BAA-8 / DSM 12333 / CCUG 43141 / JCM 11478 / NBRC 16432 / NCIMB 13614 / HKI 0122)).